Reading from the N-terminus, the 295-residue chain is Acetylglutamate kinase (295 aa).

Substrate-binding positions include 64 to 65 (GG), arginine 86, and asparagine 190.

It belongs to the acetylglutamate kinase family. ArgB subfamily.

It localises to the cytoplasm. It carries out the reaction N-acetyl-L-glutamate + ATP = N-acetyl-L-glutamyl 5-phosphate + ADP. The protein operates within amino-acid biosynthesis; L-arginine biosynthesis; N(2)-acetyl-L-ornithine from L-glutamate: step 2/4. In terms of biological role, catalyzes the ATP-dependent phosphorylation of N-acetyl-L-glutamate. The sequence is that of Acetylglutamate kinase from Oleidesulfovibrio alaskensis (strain ATCC BAA-1058 / DSM 17464 / G20) (Desulfovibrio alaskensis).